We begin with the raw amino-acid sequence, 508 residues long: Light-independent protochlorophyllide reductase subunit B (508 aa).

Aspartate 36 serves as a coordination point for [4Fe-4S] cluster. Aspartate 294 serves as the catalytic Proton donor. 429–430 (GM) is a binding site for substrate.

The protein belongs to the ChlB/BchB/BchZ family. In terms of assembly, protochlorophyllide reductase is composed of three subunits; ChlL, ChlN and ChlB. Forms a heterotetramer of two ChlB and two ChlN subunits. [4Fe-4S] cluster serves as cofactor.

It carries out the reaction chlorophyllide a + oxidized 2[4Fe-4S]-[ferredoxin] + 2 ADP + 2 phosphate = protochlorophyllide a + reduced 2[4Fe-4S]-[ferredoxin] + 2 ATP + 2 H2O. It functions in the pathway porphyrin-containing compound metabolism; chlorophyll biosynthesis (light-independent). Functionally, component of the dark-operative protochlorophyllide reductase (DPOR) that uses Mg-ATP and reduced ferredoxin to reduce ring D of protochlorophyllide (Pchlide) to form chlorophyllide a (Chlide). This reaction is light-independent. The NB-protein (ChlN-ChlB) is the catalytic component of the complex. This chain is Light-independent protochlorophyllide reductase subunit B, found in Synechocystis sp. (strain ATCC 27184 / PCC 6803 / Kazusa).